The primary structure comprises 220 residues: Deoxyribose-phosphate aldolase (220 aa).

D89 serves as the catalytic Proton donor/acceptor. K151 acts as the Schiff-base intermediate with acetaldehyde in catalysis. The active-site Proton donor/acceptor is K180.

It belongs to the DeoC/FbaB aldolase family. DeoC type 1 subfamily.

It is found in the cytoplasm. The catalysed reaction is 2-deoxy-D-ribose 5-phosphate = D-glyceraldehyde 3-phosphate + acetaldehyde. The protein operates within carbohydrate degradation; 2-deoxy-D-ribose 1-phosphate degradation; D-glyceraldehyde 3-phosphate and acetaldehyde from 2-deoxy-alpha-D-ribose 1-phosphate: step 2/2. Functionally, catalyzes a reversible aldol reaction between acetaldehyde and D-glyceraldehyde 3-phosphate to generate 2-deoxy-D-ribose 5-phosphate. The protein is Deoxyribose-phosphate aldolase of Streptococcus pneumoniae serotype 4 (strain ATCC BAA-334 / TIGR4).